The chain runs to 482 residues: Ubiquitin carboxyl-terminal hydrolase 6 (482 aa).

Residues P2–I77 enclose the Ubiquitin-like domain. Positions A104–R478 constitute a USP domain. The active-site Nucleophile is the C113. A calmodulin-binding region spans residues S172 to G191. Composition is skewed to basic and acidic residues over residues P350–K361 and G371–D381. The interval P350–T407 is disordered. Positions A382–S393 are enriched in low complexity. Residue H430 is the Proton acceptor of the active site.

Belongs to the peptidase C19 family. Interacts with calmodulin (CaM).

It carries out the reaction Thiol-dependent hydrolysis of ester, thioester, amide, peptide and isopeptide bonds formed by the C-terminal Gly of ubiquitin (a 76-residue protein attached to proteins as an intracellular targeting signal).. Functionally, recognizes and hydrolyzes the peptide bond at the C-terminal Gly of ubiquitin. Involved in the processing of poly-ubiquitin precursors as well as that of ubiquitinated proteins. This Arabidopsis thaliana (Mouse-ear cress) protein is Ubiquitin carboxyl-terminal hydrolase 6 (UBP6).